We begin with the raw amino-acid sequence, 203 residues long: Cell division protein SepF (203 aa).

Disordered regions lie at residues 26-51 (DGEL…RRGQ) and 167-203 (GTAS…WRNQ). Basic and acidic residues-rich tracts occupy residues 39–50 (EPPRRSAPERRG) and 183–203 (RRSE…WRNQ).

It belongs to the SepF family. Homodimer. Interacts with FtsZ.

The protein localises to the cytoplasm. Its function is as follows. Cell division protein that is part of the divisome complex and is recruited early to the Z-ring. Probably stimulates Z-ring formation, perhaps through the cross-linking of FtsZ protofilaments. Its function overlaps with FtsA. This chain is Cell division protein SepF, found in Symbiobacterium thermophilum (strain DSM 24528 / JCM 14929 / IAM 14863 / T).